A 747-amino-acid chain; its full sequence is DNA topoisomerase 4 subunit A (747 aa).

Positions 35–498 (LPFIGDGLKP…EAKMISESDM (464 aa)) constitute a Topo IIA-type catalytic domain. The O-(5'-phospho-DNA)-tyrosine intermediate role is filled by Tyr-124.

It belongs to the type II topoisomerase GyrA/ParC subunit family. ParC type 1 subfamily. Heterotetramer composed of ParC and ParE.

It is found in the cell membrane. The catalysed reaction is ATP-dependent breakage, passage and rejoining of double-stranded DNA.. In terms of biological role, topoisomerase IV is essential for chromosome segregation. It relaxes supercoiled DNA. Performs the decatenation events required during the replication of a circular DNA molecule. The chain is DNA topoisomerase 4 subunit A from Haemophilus influenzae (strain ATCC 51907 / DSM 11121 / KW20 / Rd).